A 228-amino-acid polypeptide reads, in one-letter code: Ribonuclease 3 (228 aa).

An RNase III domain is found at 8-130 (LKRLERRVDY…IIGAAFLDSD (123 aa)). E43 is a binding site for Mg(2+). D47 is a catalytic residue. D116 and E119 together coordinate Mg(2+). Residue E119 is part of the active site. Residues 157–226 (DPKTRLQEHL…ANKMLDSLSG (70 aa)) form the DRBM domain.

The protein belongs to the ribonuclease III family. As to quaternary structure, homodimer. The cofactor is Mg(2+).

The protein localises to the cytoplasm. The enzyme catalyses Endonucleolytic cleavage to 5'-phosphomonoester.. Its function is as follows. Digests double-stranded RNA. Involved in the processing of primary rRNA transcript to yield the immediate precursors to the large and small rRNAs (23S and 16S). Processes some mRNAs, and tRNAs when they are encoded in the rRNA operon. Processes pre-crRNA and tracrRNA of type II CRISPR loci if present in the organism. The polypeptide is Ribonuclease 3 (Psychromonas ingrahamii (strain DSM 17664 / CCUG 51855 / 37)).